Here is a 179-residue protein sequence, read N- to C-terminus: Adenine phosphoribosyltransferase (179 aa).

The protein belongs to the purine/pyrimidine phosphoribosyltransferase family. Homodimer.

The protein localises to the cytoplasm. It carries out the reaction AMP + diphosphate = 5-phospho-alpha-D-ribose 1-diphosphate + adenine. The protein operates within purine metabolism; AMP biosynthesis via salvage pathway; AMP from adenine: step 1/1. Its function is as follows. Catalyzes a salvage reaction resulting in the formation of AMP, that is energically less costly than de novo synthesis. This chain is Adenine phosphoribosyltransferase, found in Nitrobacter hamburgensis (strain DSM 10229 / NCIMB 13809 / X14).